The sequence spans 275 residues: Shikimate dehydrogenase (NADP(+)) (275 aa).

Shikimate is bound by residues 15–17 (SKS) and T62. K66 (proton acceptor) is an active-site residue. Position 78 (E78) interacts with NADP(+). Residues N87 and D102 each coordinate shikimate. Residues 127-131 (GAGGA), 151-156 (NRTPQK), and M215 each bind NADP(+). A shikimate-binding site is contributed by Y217. Position 239 (G239) interacts with NADP(+).

The protein belongs to the shikimate dehydrogenase family. Homodimer.

The catalysed reaction is shikimate + NADP(+) = 3-dehydroshikimate + NADPH + H(+). It functions in the pathway metabolic intermediate biosynthesis; chorismate biosynthesis; chorismate from D-erythrose 4-phosphate and phosphoenolpyruvate: step 4/7. Functionally, involved in the biosynthesis of the chorismate, which leads to the biosynthesis of aromatic amino acids. Catalyzes the reversible NADPH linked reduction of 3-dehydroshikimate (DHSA) to yield shikimate (SA). The chain is Shikimate dehydrogenase (NADP(+)) from Nitrosospira multiformis (strain ATCC 25196 / NCIMB 11849 / C 71).